The sequence spans 209 residues: tRNA (guanine-N(7)-)-methyltransferase (209 aa).

S-adenosyl-L-methionine-binding residues include aspartate 35, glutamate 60, asparagine 87, and aspartate 113. Aspartate 113 is an active-site residue. Lysine 117 and aspartate 149 together coordinate substrate.

It belongs to the class I-like SAM-binding methyltransferase superfamily. TrmB family.

The catalysed reaction is guanosine(46) in tRNA + S-adenosyl-L-methionine = N(7)-methylguanosine(46) in tRNA + S-adenosyl-L-homocysteine. It participates in tRNA modification; N(7)-methylguanine-tRNA biosynthesis. Its function is as follows. Catalyzes the formation of N(7)-methylguanine at position 46 (m7G46) in tRNA. This chain is tRNA (guanine-N(7)-)-methyltransferase, found in Prochlorococcus marinus subsp. pastoris (strain CCMP1986 / NIES-2087 / MED4).